A 515-amino-acid polypeptide reads, in one-letter code: Zinc metalloproteinase-disintegrin-like EoMP06 (515 aa).

Residues 1–94 (VEDHCYYHGR…TLGLIVPPHG (94 aa)) constitute a propeptide that is removed on maturation. At Gln-95 the chain carries Pyrrolidone carboxylic acid. The 197-residue stretch at 100–296 (KFIELIIVVD…YNPKCIVDPP (197 aa)) folds into the Peptidase M12B domain. Glu-103 provides a ligand contact to Ca(2+). Asn-160 carries N-linked (GlcNAc...) asparagine glycosylation. Asp-187 is a binding site for Ca(2+). Residues Asn-194 and Asn-225 are each glycosylated (N-linked (GlcNAc...) asparagine). Intrachain disulfides connect Cys-211–Cys-291, Cys-251–Cys-275, and Cys-253–Cys-258. His-236 serves as a coordination point for Zn(2+). The active site involves Glu-237. Zn(2+) contacts are provided by His-240 and His-246. Residues Cys-291, Val-306, Asn-309, Val-311, Glu-313, Glu-316, and Asp-319 each contribute to the Ca(2+) site. A Disintegrin domain is found at 304–390 (PAVCGNGVWE…ECPRNEFQRN (87 aa)). 14 disulfides stabilise this stretch: Cys-307-Cys-336, Cys-318-Cys-331, Cys-320-Cys-326, Cys-330-Cys-353, Cys-344-Cys-350, Cys-349-Cys-375, Cys-362-Cys-382, Cys-369-Cys-401, Cys-394-Cys-406, Cys-413-Cys-466, Cys-428-Cys-477, Cys-441-Cys-454, Cys-461-Cys-503, and Cys-497-Cys-508. Positions 368–370 (DCD) match the D/ECD-tripeptide motif. Residues Asp-370, Val-371, and Asn-385 each coordinate Ca(2+).

The protein belongs to the venom metalloproteinase (M12B) family. P-III subfamily. P-IIIa sub-subfamily. As to quaternary structure, monomer. Requires Zn(2+) as cofactor. As to expression, expressed by the venom gland.

The protein localises to the secreted. Its function is as follows. Snake venom zinc metalloproteinase that catalyzes the conversion of prothrombin (F2) to alpha-thrombin through formation of a thrombin intermediate, thereby functioning as a procoagulant protein. This Echis ocellatus (Ocellated saw-scaled viper) protein is Zinc metalloproteinase-disintegrin-like EoMP06.